The sequence spans 1492 residues: Copper-transporting ATPase 1 (1492 aa).

The Cytoplasmic portion of the chain corresponds to 1–645 (MEPNMDANSI…KREIKQWRGS (645 aa)). 2 consecutive HMA domains span residues 8 to 74 (NSIT…FDAL) and 85 to 151 (TNTV…LDMG). Thr-18, Cys-19, and Cys-22 together coordinate Cu(+). Thr-152 bears the Phosphothreonine mark. In terms of domain architecture, HMA 3 spans 171–237 (VLLKMRVEGM…QIEAVGFPAF (67 aa)). Positions 182 and 185 each coordinate Cu(+). The residue at position 270 (Ser-270) is a Phosphoserine. In terms of domain architecture, HMA 4 spans 277 to 343 (SAITFTIDGM…AIEAVSPGQY (67 aa)). Cu(+) is bound by residues Cys-288 and Cys-291. Thr-327 is modified (phosphothreonine). 4 positions are modified to phosphoserine: Ser-339, Ser-353, Ser-357, and Ser-362. HMA domains are found at residues 377-443 (QEVV…FDAV), 480-546 (NKCY…FGAV), and 556-622 (GILE…FEAS). 6 residues coordinate Cu(+): Cys-388, Cys-391, Cys-491, Cys-494, Cys-567, and Cys-570. The helical transmembrane segment at 646-667 (FLVSLFFCIPVMGLMIYMMVMD) threads the bilayer. Residues 668 to 706 (HHLATLNHNQNMSNEEMINMHSSMFLERQILPGLSIMNL) are Extracellular-facing. N-linked (GlcNAc...) asparagine glycosylation occurs at Asn-678. Residues 707 to 726 (LSLLLCLPVQFCGGWYFYIQ) traverse the membrane as a helical segment. Residues 727–733 (AYKALRH) lie on the Cytoplasmic side of the membrane. A helical membrane pass occupies residues 734 to 754 (KTANMDVLIVLATTIAFAYSL). Residues 755–773 (VILLVAMYERAKVNPITFF) lie on the Extracellular side of the membrane. The helical transmembrane segment at 774-794 (DTPPMLFVFIALGRWLEHIAK) threads the bilayer. Topologically, residues 795–927 (GKTSEALAKL…SKAPIQQFAD (133 aa)) are cytoplasmic. A helical transmembrane segment spans residues 928 to 951 (KLSGYFVPFIVLVSIVTLLVWIII). At 952–981 (GFQNFEIVEAYFPGYNRSISRTETIIRFAF) the chain is on the extracellular side. A helical transmembrane segment spans residues 982–1003 (QASITVLCIACPCSLGLATPTA). Residues 1004-1348 (VMVGTGVGAQ…LSRKTVKRIR (345 aa)) are Cytoplasmic-facing. Asp-1036 (4-aspartylphosphate intermediate) is an active-site residue. Position 1073 (Glu-1073) interacts with ATP. At Thr-1204 the chain carries Phosphothreonine. Mg(2+)-binding residues include Asp-1293 and Asp-1297. Residues 1349-1366 (INFVFALIYNLIGIPIAA) form a helical membrane-spanning segment. Residues 1367-1377 (GVFLPIGLVLQ) are Extracellular-facing. The chain crosses the membrane as a helical span at residues 1378–1397 (PWMGSAAMAASSVSVVLSSL). The Cytoplasmic portion of the chain corresponds to 1398-1492 (FLKLYRKPTY…DFREDDDTTL (95 aa)). Phosphoserine is present on residues Ser-1422, Ser-1424, Ser-1452, Ser-1455, and Ser-1458. An Endocytosis signal motif is present at residues 1459–1460 (LL). Ser-1461, Ser-1465, Ser-1468, and Ser-1478 each carry phosphoserine. The interval 1478–1492 (SLLVGDFREDDDTTL) is PDZD11-binding. The Endocytosis signal motif lies at 1479-1480 (LL).

It belongs to the cation transport ATPase (P-type) (TC 3.A.3) family. Type IB subfamily. Monomer. Interacts with PDZD11. Interacts with ATOX1 and COMMD1. Interacts with TYRP1. Directly interacts with SOD3; this interaction is copper-dependent and is required for SOD3 activity. Expressed in hippocampal neuron (at protein level). Expressed in anterior pituitary gland (at protein level).

The protein localises to the golgi apparatus. It is found in the trans-Golgi network membrane. The protein resides in the cell membrane. Its subcellular location is the melanosome membrane. It localises to the early endosome membrane. The protein localises to the cell projection. It is found in the axon. The protein resides in the dendrite. Its subcellular location is the postsynaptic density. It carries out the reaction Cu(+)(in) + ATP + H2O = Cu(+)(out) + ADP + phosphate + H(+). In terms of biological role, ATP-driven copper (Cu(+)) ion pump that plays an important role in intracellular copper ion homeostasis. Within a catalytic cycle, acquires Cu(+) ion from donor protein on the cytoplasmic side of the membrane and delivers it to acceptor protein on the lumenal side. The transfer of Cu(+) ion across the membrane is coupled to ATP hydrolysis and is associated with a transient phosphorylation that shifts the pump conformation from inward-facing to outward-facing state. Under physiological conditions, at low cytosolic copper concentration, it is localized at the trans-Golgi network (TGN) where it transfers Cu(+) ions to cuproenzymes of the secretory pathway. Upon elevated cytosolic copper concentrations, it relocalizes to the plasma membrane where it is responsible for the export of excess Cu(+) ions. May play a dual role in neuron function and survival by regulating cooper efflux and neuronal transmission at the synapse as well as by supplying Cu(+) ions to enzymes such as PAM, TYR and SOD3. In the melanosomes of pigmented cells, provides copper cofactor to TYR to form an active TYR holoenzyme for melanin biosynthesis. This is Copper-transporting ATPase 1 from Rattus norvegicus (Rat).